We begin with the raw amino-acid sequence, 447 residues long: Adenylosuccinate synthetase (447 aa).

Residues 35-41 and 63-65 contribute to the GTP site; these read GDEGKGK and GHT. D36 functions as the Proton acceptor in the catalytic mechanism. D36 and G63 together coordinate Mg(2+). IMP-binding positions include 36–39, 61–64, T153, R167, N245, T260, and R324; these read DEGK and NAGH. H64 serves as the catalytic Proton donor. 320–326 provides a ligand contact to substrate; that stretch reads VTTKRKR. GTP is bound by residues R326, 352-354, and 435-437; these read KLD and GVG.

It belongs to the adenylosuccinate synthetase family. Homodimer. Mg(2+) serves as cofactor.

It localises to the cytoplasm. It carries out the reaction IMP + L-aspartate + GTP = N(6)-(1,2-dicarboxyethyl)-AMP + GDP + phosphate + 2 H(+). It participates in purine metabolism; AMP biosynthesis via de novo pathway; AMP from IMP: step 1/2. Its function is as follows. Plays an important role in the de novo pathway and in the salvage pathway of purine nucleotide biosynthesis. Catalyzes the first committed step in the biosynthesis of AMP from IMP. The polypeptide is Adenylosuccinate synthetase (Drosophila sechellia (Fruit fly)).